Here is a 1314-residue protein sequence, read N- to C-terminus: Angiotensin-converting enzyme (1314 aa).

The N-terminal stretch at 1 to 35 (MGAASGQRGQGPPSPLLLLWLSLLLLLLPPSPAPA) is a signal peptide. Topologically, residues 36 to 1265 (LDPGLQPGNF…LEPQQARVGQ (1230 aa)) are extracellular. N-linked (GlcNAc...) asparagine glycosylation is found at N44, N60, N80, N117, and N166. Peptidase M2 domains lie at 46-630 (SADE…LGWP) and 649-1228 (VTDE…LGWP). A disulfide bridge connects residues C163 and C171. Chloride is bound at residue Y237. N324 is a glycosylation site (N-linked (GlcNAc...) asparagine). C365 and C383 form a disulfide bridge. Position 396 (H396) interacts with Zn(2+). E397 acts as the Proton acceptor 1 in catalysis. H400 and E424 together coordinate Zn(2+). A glycan (N-linked (GlcNAc...) asparagine) is linked at N515. H526 serves as the catalytic Proton donor 1. Residue R535 coordinates chloride. A disulfide bridge links C551 with C563. 4 N-linked (GlcNAc...) asparagine glycosylation sites follow: N683, N701, N720, and N766. C763 and C769 are joined by a disulfide. Positions 797 and 835 each coordinate chloride. N-linked (GlcNAc...) asparagine glycosylation is present at N948. C963 and C981 are joined by a disulfide. Residue H994 coordinates Zn(2+). E995 (proton acceptor 2) is an active-site residue. Zn(2+) contacts are provided by H998 and E1022. 2 residues coordinate chloride: W1096 and R1100. H1124 functions as the Proton donor 2 in the catalytic mechanism. R1133 serves as a coordination point for chloride. Residues C1149 and C1161 are joined by a disulfide bond. N-linked (GlcNAc...) asparagine glycosylation is present at N1197. The segment at 1221 to 1262 (HGETLGWPEYNWTPNTARSEGPFPESGRVNFLGMYLEPQQAR) is juxtamembrane stalk. Residues 1266–1282 (WVLLFLGVSLLVATLGL) form a helical membrane-spanning segment. Topologically, residues 1283 to 1314 (THRLFSIRQHGHSLHRPHRGPQFGSEVELRHS) are cytoplasmic. Residues 1293–1314 (GHSLHRPHRGPQFGSEVELRHS) form a disordered region. Position 1307 is a phosphoserine (S1307).

This sequence belongs to the peptidase M2 family. As to quaternary structure, monomer and homodimer; homodimerizes following binding to an inhibitor. Interacts with calmodulin (CALM1, CALM2 or CALM3); interaction takes place in the cytoplasmic region and regulates phosphorylation and proteolytic cleavage. The cofactor is Zn(2+). Requires chloride as cofactor. Produced following proteolytic cleavage by secretase enzymes that cleave the transmembrane form in the juxtamembrane stalk region upstream of the transmembrane region. Cleavage can take place at different sites of the juxtamembrane stalk region. Post-translationally, phosphorylated by CK2 on Ser-1307; which allows membrane retention. Phosphorylated on tyrosine residues on its extracellular part, promoting cleavage by secretase enzymes and formation of the soluble form (Angiotensin-converting enzyme, soluble form). Widely expressed with dominant expression in lung and kidney.

Its subcellular location is the cell membrane. It localises to the cytoplasm. It is found in the secreted. It catalyses the reaction Release of a C-terminal dipeptide, oligopeptide-|-Xaa-Yaa, when Xaa is not Pro, and Yaa is neither Asp nor Glu. Thus, conversion of angiotensin I to angiotensin II, with increase in vasoconstrictor activity, but no action on angiotensin II.. The catalysed reaction is angiotensin I + H2O = L-histidyl-L-leucine + angiotensin II. It carries out the reaction bradykinin + H2O = L-Phe-L-Arg + bradykinin(1-7). The enzyme catalyses substance P + H2O = substance P(1-9) + L-Leu-L-Met-NH2. It catalyses the reaction substance P + H2O = substance P(1-8) + Gly-L-Leu-L-Met-NH2. The catalysed reaction is substance P + H2O = L-Phe-L-Phe-Gly-L-Leu-L-Met-NH2 + substance P(1-6). It carries out the reaction neurotensin + H2O = neurotensin(1-11) + L-isoleucyl-L-leucine. The enzyme catalyses goralatide + H2O = N-acetyl-L-seryl-L-aspartate + L-lysyl-L-proline. It catalyses the reaction Met-enkephalin + H2O = L-phenylalanyl-L-methionine + L-tyrosylglycylglycine. The catalysed reaction is Leu-enkephalin + H2O = L-tyrosylglycylglycine + L-phenylalanyl-L-leucine. It carries out the reaction Met-enkephalin-Arg-Phe + H2O = L-arginyl-L-phenylalanine + Met-enkephalin. Its activity is regulated as follows. The dipeptidyl carboxypeptidase activity is strongly activated by chloride. The dipeptidyl carboxypeptidase activity is specifically inhibited by lisinopril, captopril and enalaprilat. With respect to regulation, strongly inhibited by lisinopril and captopril. Dipeptidyl carboxypeptidase that removes dipeptides from the C-terminus of a variety of circulating hormones, such as angiotensin I, bradykinin or enkephalins, thereby playing a key role in the regulation of blood pressure, electrolyte homeostasis or synaptic plasticity. Composed of two similar catalytic domains, each possessing a functional active site, with different selectivity for substrates. Plays a major role in the angiotensin-renin system that regulates blood pressure and sodium retention by the kidney by converting angiotensin I to angiotensin II, resulting in an increase of the vasoconstrictor activity of angiotensin. Also able to inactivate bradykinin, a potent vasodilator, and therefore enhance the blood pressure response. Acts as a regulator of synaptic transmission by mediating cleavage of neuropeptide hormones, such as substance P, neurotensin or enkephalins. Catalyzes degradation of different enkephalin neuropeptides (Met-enkephalin, Leu-enkephalin, Met-enkephalin-Arg-Phe and possibly Met-enkephalin-Arg-Gly-Leu). Acts as a regulator of synaptic plasticity in the nucleus accumbens of the brain by mediating cleavage of Met-enkephalin-Arg-Phe, a strong ligand of Mu-type opioid receptor OPRM1, into Met-enkephalin. Met-enkephalin-Arg-Phe cleavage by ACE decreases activation of OPRM1, leading to long-term synaptic potentiation of glutamate release. Also acts as a regulator of hematopoietic stem cell differentiation by mediating degradation of hemoregulatory peptide N-acetyl-SDKP (AcSDKP). Acts as a regulator of cannabinoid signaling pathway by mediating degradation of hemopressin, an antagonist peptide of the cannabinoid receptor CNR1. Involved in amyloid-beta metabolism by catalyzing degradation of Amyloid-beta protein 40 and Amyloid-beta protein 42 peptides, thereby preventing plaque formation. Catalyzes cleavage of cholecystokinin (maturation of Cholecystokinin-8 and Cholecystokinin-5) and Gonadoliberin-1 (both maturation and degradation) hormones. Degradation of hemoregulatory peptide N-acetyl-SDKP (AcSDKP) and amyloid-beta proteins is mediated by the N-terminal catalytic domain, while angiotensin I and cholecystokinin cleavage is mediated by the C-terminal catalytic region. Functionally, soluble form that is released in blood plasma and other body fluids following proteolytic cleavage in the juxtamembrane stalk region. In terms of biological role, isoform produced by alternative promoter usage that is specifically expressed in spermatocytes and adult testis, and which is required for male fertility. In contrast to somatic isoforms, only contains one catalytic domain. Acts as a dipeptidyl carboxypeptidase that removes dipeptides from the C-terminus of substrates. The identity of substrates that are needed for male fertility is unknown. May also have a glycosidase activity which releases GPI-anchored proteins from the membrane by cleaving the mannose linkage in the GPI moiety. The GPIase activity was reported to be essential for the egg-binding ability of the sperm. This activity is however unclear and has been challenged by other groups, suggesting that it may be indirect. This chain is Angiotensin-converting enzyme, found in Mesocricetus auratus (Golden hamster).